The following is a 37-amino-acid chain: Large ribosomal subunit protein bL36 (37 aa).

Belongs to the bacterial ribosomal protein bL36 family.

The sequence is that of Large ribosomal subunit protein bL36 from Bifidobacterium adolescentis (strain ATCC 15703 / DSM 20083 / NCTC 11814 / E194a).